The primary structure comprises 169 residues: NAD(P)H-quinone oxidoreductase subunit 6, chloroplastic (169 aa).

5 consecutive transmembrane segments (helical) span residues 7–27, 29–49, 58–78, 90–110, and 139–159; these read FSSA…IFLP, IVYA…IYVL, AQVL…IMLV, SPPL…VQMI, and LLAF…AIVL.

It belongs to the complex I subunit 6 family. NDH is composed of at least 16 different subunits, 5 of which are encoded in the nucleus.

The protein localises to the plastid. It localises to the chloroplast thylakoid membrane. It catalyses the reaction a plastoquinone + NADH + (n+1) H(+)(in) = a plastoquinol + NAD(+) + n H(+)(out). It carries out the reaction a plastoquinone + NADPH + (n+1) H(+)(in) = a plastoquinol + NADP(+) + n H(+)(out). Functionally, NDH shuttles electrons from NAD(P)H:plastoquinone, via FMN and iron-sulfur (Fe-S) centers, to quinones in the photosynthetic chain and possibly in a chloroplast respiratory chain. The immediate electron acceptor for the enzyme in this species is believed to be plastoquinone. Couples the redox reaction to proton translocation, and thus conserves the redox energy in a proton gradient. This Nephroselmis olivacea (Green alga) protein is NAD(P)H-quinone oxidoreductase subunit 6, chloroplastic (ndhG).